A 396-amino-acid polypeptide reads, in one-letter code: Growth-regulating factor 1 (396 aa).

The QLQ domain occupies 18–53 (PFTASQWQELEHQALIYKYMASGTPIPSDLILPLRR). 2 short sequence motifs (bipartite nuclear localization signal) span residues 86 to 105 (RKAE…KKWR) and 123 to 130 (RGKNRSRK). In terms of domain architecture, WRC spans 90–134 (DPEPGRCRRTDGKKWRCSKEAYPDSKYCEKHMHRGKNRSRKPVEM). The segment at 117 to 176 (CEKHMHRGKNRSRKPVEMSLATPPPPSSSATSAASNSSAGVAPTTTTTSSPAPSYSRPAP) is disordered. The segment covering 120 to 129 (HMHRGKNRSR) has biased composition (basic residues). Residues 144 to 174 (SSATSAASNSSAGVAPTTTTTSSPAPSYSRP) are compositionally biased toward low complexity.

This sequence belongs to the GRF family. Highly expressed in the intercalary meristem of the internode and in the shoot apex. Detected in the leaf primordia and emerging leaves in the uppermost node. Preferentially localized in the epidermis and in the tissues surrounding vascular bundles of the intercalary meristem of the internode and in adventitious roots of the second highest node. Low expression in the coleoptile and in the youngest leaf.

The protein resides in the nucleus. In terms of biological role, transcription activator that plays a regulatory role in gibberellin-induced stem elongation. The sequence is that of Growth-regulating factor 1 (GRF1) from Oryza sativa subsp. indica (Rice).